A 121-amino-acid chain; its full sequence is D-ornithine 4,5-aminomutase subunit alpha (121 aa).

In terms of assembly, heterotetramer of 2 alpha (OraS) and 2 beta (OraE) subunits.

The catalysed reaction is D-ornithine = (2R,4S)-2,4-diaminopentanoate. Its activity is regulated as follows. Increased activity in the presence of dithiothreitol (DTT) in vitro. Inhibited by 1 mM potassium phosphate and potassium chloride. Inhibited by L-alpha-ornithine, D,L-alpha-lysine, L-beta-lysine (50%-60%), L-alpha-lysine (26%) and by delta-amino-n-valeric acid to a lesser extent. Significant decrease in activity is observed in the presence of 0.2 mM p-chloromercuribenzoate, N-ethylmaleimide and also by 2 mM iodoacetate to a lesser extent but not inhibited by arsenite. Functionally, component of a complex that catalyzes the reversible migration of the omega amino group of D-ornithine to C-4 to form (2R,4S)-2,4-diaminopentanoic acid. The role of OraS remains obscure; however, it seems to be required for a correct folding of the OraE subunit. The complex is active only on D-ornithine and 2,4-diaminopentanoic acid and not active on L-ornithine, L-beta-lysine, L-alpha-lysine or D-alpha-lysine. In Acetoanaerobium sticklandii (strain ATCC 12662 / DSM 519 / JCM 1433 / CCUG 9281 / NCIMB 10654 / HF) (Clostridium sticklandii), this protein is D-ornithine 4,5-aminomutase subunit alpha (oraS).